A 499-amino-acid chain; its full sequence is Glycerol kinase (499 aa).

Thr13 provides a ligand contact to ADP. Residues Thr13, Thr14, and Ser15 each contribute to the ATP site. Thr13 is a binding site for sn-glycerol 3-phosphate. Residue Arg17 participates in ADP binding. Sn-glycerol 3-phosphate-binding residues include Arg83, Glu84, Tyr135, and Asp245. Glycerol-binding residues include Arg83, Glu84, Tyr135, Asp245, and Gln246. ADP is bound by residues Thr267 and Gly310. 4 residues coordinate ATP: Thr267, Gly310, Gln314, and Gly411. The ADP site is built by Gly411 and Asn415.

It belongs to the FGGY kinase family. Homotetramer and homodimer (in equilibrium).

It carries out the reaction glycerol + ATP = sn-glycerol 3-phosphate + ADP + H(+). Its pathway is polyol metabolism; glycerol degradation via glycerol kinase pathway; sn-glycerol 3-phosphate from glycerol: step 1/1. Activated by phosphorylation and inhibited by fructose 1,6-bisphosphate (FBP). Functionally, key enzyme in the regulation of glycerol uptake and metabolism. Catalyzes the phosphorylation of glycerol to yield sn-glycerol 3-phosphate. This is Glycerol kinase from Halothermothrix orenii (strain H 168 / OCM 544 / DSM 9562).